Reading from the N-terminus, the 572-residue chain is Phosphoenolpyruvate-protein phosphotransferase (572 aa).

His190 functions as the Tele-phosphohistidine intermediate in the catalytic mechanism. The phosphoenolpyruvate site is built by Arg297 and Arg333. Mg(2+) is bound by residues Glu427 and Asp451. Residues 450-451 (ND) and Arg461 each bind phosphoenolpyruvate. The active-site Proton donor is Cys498.

The protein belongs to the PEP-utilizing enzyme family. As to quaternary structure, homodimer. Mg(2+) serves as cofactor.

Its subcellular location is the cytoplasm. The enzyme catalyses L-histidyl-[protein] + phosphoenolpyruvate = N(pros)-phospho-L-histidyl-[protein] + pyruvate. Functionally, general (non sugar-specific) component of the phosphoenolpyruvate-dependent sugar phosphotransferase system (sugar PTS). This major carbohydrate active-transport system catalyzes the phosphorylation of incoming sugar substrates concomitantly with their translocation across the cell membrane. Enzyme I transfers the phosphoryl group from phosphoenolpyruvate (PEP) to the phosphoryl carrier protein (HPr). This chain is Phosphoenolpyruvate-protein phosphotransferase (ptsI), found in Mycoplasma genitalium (strain ATCC 33530 / DSM 19775 / NCTC 10195 / G37) (Mycoplasmoides genitalium).